The sequence spans 370 residues: Aminomethyltransferase (370 aa).

The protein belongs to the GcvT family. The glycine cleavage system is composed of four proteins: P, T, L and H.

It catalyses the reaction N(6)-[(R)-S(8)-aminomethyldihydrolipoyl]-L-lysyl-[protein] + (6S)-5,6,7,8-tetrahydrofolate = N(6)-[(R)-dihydrolipoyl]-L-lysyl-[protein] + (6R)-5,10-methylene-5,6,7,8-tetrahydrofolate + NH4(+). In terms of biological role, the glycine cleavage system catalyzes the degradation of glycine. In Prochlorococcus marinus (strain AS9601), this protein is Aminomethyltransferase.